A 313-amino-acid polypeptide reads, in one-letter code: Formimidoylglutamase (313 aa).

His130, Asp155, His157, Asp159, Asp241, and Asp243 together coordinate Mn(2+).

The protein belongs to the arginase family. Mn(2+) is required as a cofactor.

The enzyme catalyses N-formimidoyl-L-glutamate + H2O = formamide + L-glutamate. Its pathway is amino-acid degradation; L-histidine degradation into L-glutamate; L-glutamate from N-formimidoyl-L-glutamate (hydrolase route): step 1/1. Catalyzes the conversion of N-formimidoyl-L-glutamate to L-glutamate and formamide. This Salmonella newport (strain SL254) protein is Formimidoylglutamase.